Reading from the N-terminus, the 208-residue chain is Methylthioribulose-1-phosphate dehydratase (208 aa).

2 residues coordinate Zn(2+): H99 and H101.

It belongs to the aldolase class II family. MtnB subfamily. Zn(2+) serves as cofactor.

It carries out the reaction 5-(methylsulfanyl)-D-ribulose 1-phosphate = 5-methylsulfanyl-2,3-dioxopentyl phosphate + H2O. It participates in amino-acid biosynthesis; L-methionine biosynthesis via salvage pathway; L-methionine from S-methyl-5-thio-alpha-D-ribose 1-phosphate: step 2/6. Its function is as follows. Catalyzes the dehydration of methylthioribulose-1-phosphate (MTRu-1-P) into 2,3-diketo-5-methylthiopentyl-1-phosphate (DK-MTP-1-P). The chain is Methylthioribulose-1-phosphate dehydratase from Aquifex aeolicus (strain VF5).